We begin with the raw amino-acid sequence, 2295 residues long: Protein DOP1B (2295 aa).

A phosphoserine mark is found at Ser556 and Ser597. Disordered stretches follow at residues Ala574 to Glu599, Gly651 to Pro684, Cys1034 to Thr1059, and Asp1092 to Leu1136. The segment covering Ala1111–His1131 has biased composition (polar residues). At Ser1167 the chain carries Phosphoserine.

The protein belongs to the DOP1 family. In terms of assembly, homooligomer. Heterotrimer with ATP9A and MON2; this interaction is retromer-independent. Interacts with SNX3. In terms of tissue distribution, expressed in liver, heart and brain.

It localises to the early endosome membrane. Its subcellular location is the golgi apparatus membrane. In terms of biological role, may play a role in regulating membrane trafficking of cargo proteins. Together with ATP9A and MON2, regulates SNX3 retromer-mediated endosomal sorting of WLS away from lysosomal degradation. The polypeptide is Protein DOP1B (Dop1b) (Mus musculus (Mouse)).